Reading from the N-terminus, the 507-residue chain is Maturase K (507 aa).

Belongs to the intron maturase 2 family. MatK subfamily.

Its subcellular location is the plastid. It localises to the chloroplast. Its function is as follows. Usually encoded in the trnK tRNA gene intron. Probably assists in splicing its own and other chloroplast group II introns. This Kalmia buxifolia (Sand myrtle) protein is Maturase K.